A 471-amino-acid chain; its full sequence is A-type ATP synthase subunit B (471 aa).

It belongs to the ATPase alpha/beta chains family. In terms of assembly, has multiple subunits with at least A(3), B(3), C, D, E, F, H, I and proteolipid K(x).

It localises to the cell membrane. In terms of biological role, component of the A-type ATP synthase that produces ATP from ADP in the presence of a proton gradient across the membrane. The B chain is a regulatory subunit. This chain is A-type ATP synthase subunit B, found in Natronomonas pharaonis (strain ATCC 35678 / DSM 2160 / CIP 103997 / JCM 8858 / NBRC 14720 / NCIMB 2260 / Gabara) (Halobacterium pharaonis).